A 211-amino-acid chain; its full sequence is Large ribosomal subunit protein uL3 (211 aa).

A disordered region spans residues 125–148 (GPASHGSKKWHRRPGSIGQRKTPG).

This sequence belongs to the universal ribosomal protein uL3 family. Part of the 50S ribosomal subunit. Forms a cluster with proteins L14 and L19. Also contacts proteins L13 and L17.

Its function is as follows. One of the primary rRNA binding proteins, it binds directly near the 3'-end of the 23S rRNA, where it nucleates assembly of the 50S subunit. This chain is Large ribosomal subunit protein uL3 (rplC), found in Deinococcus radiodurans (strain ATCC 13939 / DSM 20539 / JCM 16871 / CCUG 27074 / LMG 4051 / NBRC 15346 / NCIMB 9279 / VKM B-1422 / R1).